Here is a 128-residue protein sequence, read N- to C-terminus: Lymphocyte antigen 6 complex locus protein G5c (128 aa).

A signal peptide spans 1-29; it reads MGAEYGCLPSTSQALYVILLIVLVRMSLV. In terms of domain architecture, UPAR/Ly6 spans 37–128; the sequence is LRCYRCLLET…NPQNRVFYIP (92 aa). Cystine bridges form between Cys-39–Cys-66, Cys-42–Cys-51, Cys-58–Cys-85, Cys-94–Cys-111, and Cys-112–Cys-117. A glycan (N-linked (GlcNAc...) asparagine) is linked at Asn-73.

As to quaternary structure, forms oligomers. Post-translationally, N-glycosylated. Abundantly expressed in the epididymis.

It localises to the secreted. May have a role in hematopoietic cell differentiation. The polypeptide is Lymphocyte antigen 6 complex locus protein G5c (LY6G5C) (Canis lupus familiaris (Dog)).